The following is a 330-amino-acid chain: Ribose-phosphate pyrophosphokinase (330 aa).

Asp-55 to Glu-57 contributes to the ATP binding site. Mg(2+) is bound by residues His-148 and Asp-187. Lys-211 is an active-site residue. D-ribose 5-phosphate is bound by residues Arg-213, Asp-237, and Asp-241–Thr-245.

This sequence belongs to the ribose-phosphate pyrophosphokinase family. Class I subfamily. Homohexamer. Mg(2+) serves as cofactor.

Its subcellular location is the cytoplasm. The enzyme catalyses D-ribose 5-phosphate + ATP = 5-phospho-alpha-D-ribose 1-diphosphate + AMP + H(+). The protein operates within metabolic intermediate biosynthesis; 5-phospho-alpha-D-ribose 1-diphosphate biosynthesis; 5-phospho-alpha-D-ribose 1-diphosphate from D-ribose 5-phosphate (route I): step 1/1. In terms of biological role, involved in the biosynthesis of the central metabolite phospho-alpha-D-ribosyl-1-pyrophosphate (PRPP) via the transfer of pyrophosphoryl group from ATP to 1-hydroxyl of ribose-5-phosphate (Rib-5-P). The polypeptide is Ribose-phosphate pyrophosphokinase (Nostoc sp. (strain PCC 7120 / SAG 25.82 / UTEX 2576)).